The primary structure comprises 807 residues: Glycerol-3-phosphate acyltransferase (807 aa).

The HXXXXD motif signature appears at 305–310 (CHRSHM).

Belongs to the GPAT/DAPAT family.

Its subcellular location is the cell inner membrane. It carries out the reaction sn-glycerol 3-phosphate + an acyl-CoA = a 1-acyl-sn-glycero-3-phosphate + CoA. Its pathway is phospholipid metabolism; CDP-diacylglycerol biosynthesis; CDP-diacylglycerol from sn-glycerol 3-phosphate: step 1/3. In Aliivibrio fischeri (strain MJ11) (Vibrio fischeri), this protein is Glycerol-3-phosphate acyltransferase.